A 242-amino-acid polypeptide reads, in one-letter code: Probable ABC transporter ATP-binding protein PEB1C (242 aa).

In terms of domain architecture, ABC transporter spans 2–236 (IELKNVNKYY…PKTERARLFL (235 aa)). 34–41 (GPSGSGKS) serves as a coordination point for ATP.

The protein belongs to the ABC transporter superfamily.

Its subcellular location is the cell inner membrane. Most probably involved, with PEB1, in a binding-protein-dependent transport system for an amino acid. Probably responsible for energy coupling to the transport system. This is Probable ABC transporter ATP-binding protein PEB1C (peb1C) from Campylobacter jejuni subsp. jejuni serotype O:23/36 (strain 81-176).